The sequence spans 317 residues: 4-diphosphocytidyl-2-C-methyl-D-erythritol kinase (317 aa).

Lysine 11 is a catalytic residue. 99–109 (PVAAGLAGGST) provides a ligand contact to ATP. Residue aspartate 141 is part of the active site.

The protein belongs to the GHMP kinase family. IspE subfamily.

The enzyme catalyses 4-CDP-2-C-methyl-D-erythritol + ATP = 4-CDP-2-C-methyl-D-erythritol 2-phosphate + ADP + H(+). It functions in the pathway isoprenoid biosynthesis; isopentenyl diphosphate biosynthesis via DXP pathway; isopentenyl diphosphate from 1-deoxy-D-xylulose 5-phosphate: step 3/6. Catalyzes the phosphorylation of the position 2 hydroxy group of 4-diphosphocytidyl-2C-methyl-D-erythritol. The sequence is that of 4-diphosphocytidyl-2-C-methyl-D-erythritol kinase from Nostoc punctiforme (strain ATCC 29133 / PCC 73102).